Reading from the N-terminus, the 323-residue chain is Prostaglandin F synthase 1 (323 aa).

Residues 20–24 and D50 each bind NADP(+); that span reads GFGTY. The Proton donor role is filled by Y55. Residue H117 participates in substrate binding. NADP(+) contacts are provided by residues 166–167, Q190, 216–221, and 270–280; these read SN, YAALGA, and KSFNKKRIKEN.

This sequence belongs to the aldo/keto reductase family. As to quaternary structure, monomer. The N-terminus is blocked.

The protein resides in the cytoplasm. It catalyses the reaction prostaglandin F2alpha + NADP(+) = prostaglandin D2 + NADPH + H(+). The protein operates within lipid metabolism; prostaglandin biosynthesis. Catalyzes the reduction of PGD(2) and PGH(2) to PGF(2 alpha) and a stereoisomer, respectively. It has a broad substrate specificity and also reduces other carbonyl compounds. This Bos taurus (Bovine) protein is Prostaglandin F synthase 1.